Reading from the N-terminus, the 349-residue chain is Probable transporter vicT (349 aa).

In terms of domain architecture, EamA spans 25–153 (IAAALLHALA…TALAGVVLVL (129 aa)). 9 consecutive transmembrane segments (helical) span residues 49–69 (PFTV…AYLW), 89–109 (AAGG…LSLS), 111–131 (ATVL…YWEG), 133–153 (TFAF…VLVL), 179–199 (LKGV…FSAM), 215–235 (FGVS…EVVW), 244–264 (LLAI…AGLG), 269–289 (RVTI…WAIW), and 294–314 (NVLT…PYLF).

It belongs to the TPT transporter family. SLC35D subfamily.

Its subcellular location is the membrane. Probable transporter; part of the gene cluster that mediates the biosynthesis of the secondary metabolite victorin, the molecular basis for Victoria blight of oats. This Bipolaris victoriae (strain FI3) (Victoria blight of oats agent) protein is Probable transporter vicT.